The following is a 122-amino-acid chain: Hydrogenase maturation factor HypA (122 aa).

H2 provides a ligand contact to Ni(2+). C73, C75, C95, and C98 together coordinate Zn(2+).

Belongs to the HypA/HybF family.

Involved in the maturation of [NiFe] hydrogenases. Required for nickel insertion into the metal center of the hydrogenase. In Methanothermobacter thermautotrophicus (strain ATCC 29096 / DSM 1053 / JCM 10044 / NBRC 100330 / Delta H) (Methanobacterium thermoautotrophicum), this protein is Hydrogenase maturation factor HypA.